Reading from the N-terminus, the 281-residue chain is Pantothenate synthetase (281 aa).

ATP is bound at residue 30 to 37 (MGNLHQGH). His-37 serves as the catalytic Proton donor. Position 61 (Gln-61) interacts with (R)-pantoate. Gln-61 is a beta-alanine binding site. 149-152 (GNKD) is an ATP binding site. Gln-155 is a binding site for (R)-pantoate. ATP is bound by residues Ile-178 and 186-189 (MSSR).

The protein belongs to the pantothenate synthetase family. As to quaternary structure, homodimer.

It is found in the cytoplasm. It carries out the reaction (R)-pantoate + beta-alanine + ATP = (R)-pantothenate + AMP + diphosphate + H(+). It participates in cofactor biosynthesis; (R)-pantothenate biosynthesis; (R)-pantothenate from (R)-pantoate and beta-alanine: step 1/1. Functionally, catalyzes the condensation of pantoate with beta-alanine in an ATP-dependent reaction via a pantoyl-adenylate intermediate. The chain is Pantothenate synthetase from Shewanella baltica (strain OS185).